A 1782-amino-acid polypeptide reads, in one-letter code: A-kinase anchor protein 12 (1782 aa).

Disordered regions lie at residues 1–53 (MGAG…DPAT), 71–169 (QDEL…QAND), 189–400 (KTEK…APLA), 421–886 (VSTV…ELSE), 938–1089 (EREV…LKKE), 1105–1134 (PFTQGKVVGQTTPESFEKAPQVTESIESSE), 1157–1274 (AIPP…ADEK), and 1305–1355 (KGEG…HVNE). Gly-2 carries the N-myristoyl glycine lipid modification. Residues Ser-11, Ser-19, Ser-28, Ser-75, and Ser-96 each carry the phosphoserine modification. Residues 16-53 (PEGSSTPAEPEPSGGGPSAEAAPDTTADPAIAASDPAT) show a composition bias toward low complexity. Positions 108–125 (GQRDSEDVSKRDSDKEMA) are enriched in basic and acidic residues. Over residues 145–154 (IIEQIPSSES) the composition is skewed to low complexity. Ser-154 carries the phosphoserine modification. The segment covering 157 to 168 (EELTQPTESQAN) has biased composition (polar residues). Phosphoserine is present on residues Ser-219, Ser-248, Ser-258, Ser-280, Ser-283, Ser-286, Ser-347, and Ser-371. Residues 226–249 (ASKESEPKQSTEKPEETLKREQSH) are compositionally biased toward basic and acidic residues. Residues 266-557 (KEEGEEKQEK…TQVPADSPDS (292 aa)) form an involved in PKC-binding region. Composition is skewed to basic and acidic residues over residues 315-347 (KPKEDEVEASEKKKEQEPEKVDTEEDGKAEVAS) and 363-379 (ESAHEPRLSAEYEKVEL). The residue at position 374 (Tyr-374) is a Phosphotyrosine. Phosphoserine is present on residues Ser-381 and Ser-392. The segment covering 423 to 435 (TVEERTEEQKTEV) has biased composition (basic and acidic residues). The segment covering 446-456 (ELVEMDAEPQE) has biased composition (acidic residues). A compositionally biased stretch (basic and acidic residues) spans 458–468 (EPAKELVKLKE). A phosphoserine mark is found at Ser-483 and Ser-505. Residues 528-537 (LSGKKQKGKR) show a composition bias toward basic residues. A phosphoserine mark is found at Ser-554, Ser-557, Ser-598, Ser-612, Ser-627, and Ser-629. Residues 607–627 (VTPWASFKKMVTPKKRVRRPS) carry the AKAP CaM-binding 1 motif. The segment covering 625 to 639 (RPSESDKEDELDKVK) has biased composition (basic and acidic residues). A compositionally biased stretch (low complexity) spans 640 to 652 (SATLSSTESTASE). A Phosphothreonine modification is found at Thr-642. Phosphoserine is present on residues Ser-644, Ser-645, Ser-648, and Ser-651. The span at 655–674 (EEMKGSVEEPKPEEPKRKVD) shows a compositional bias: basic and acidic residues. Phosphoserine occurs at positions 696, 697, and 698. Residues 708–724 (GGDHQKADEAGKDKETG) are compositionally biased toward basic and acidic residues. The span at 739–749 (QGSSSPEQAGS) shows a compositional bias: polar residues. 3 positions are modified to phosphoserine: Ser-749, Ser-761, and Ser-787. The AKAP CaM-binding 2 motif lies at 756–776 (VSTWESFKRLVTPRKKSKSKL). Basic and acidic residues predominate over residues 792-803 (STPDTEPGKEES). The short motif at 801 to 821 (EESWVSIKKFIPGRRKKRPDG) is the AKAP CaM-binding 3 element. Ser-806 carries the phosphoserine modification. Over residues 986–997 (GAEEGTEASAAE) the composition is skewed to low complexity. Residue Lys-1051 forms a Glycyl lysine isopeptide (Lys-Gly) (interchain with G-Cter in SUMO1) linkage. Over residues 1072-1089 (AEAERPEEQAEASGLKKE) the composition is skewed to basic and acidic residues. Residues 1164–1174 (ETPTDSETDGS) are compositionally biased toward polar residues. Composition is skewed to basic and acidic residues over residues 1187–1198 (QKDEIVEIHEEN) and 1231–1251 (EETKEQSKMEDTLEHTDKEVS). Positions 1253–1267 (ETVSILSKTEGTQEA) are enriched in polar residues. Residues Ser-1328 and Ser-1331 each carry the phosphoserine modification. Basic and acidic residues predominate over residues 1333-1355 (VEREMVVQVEREKTEAEPTHVNE). A phosphoserine mark is found at Ser-1391 and Ser-1395. Residues 1541 to 1554 (ELETKSSKLVQNII) form an RII-binding region. The tract at residues 1584–1782 (KADSQDAGQE…ESAKSELTES (199 aa)) is disordered. Position 1587 is a phosphoserine (Ser-1587). The segment covering 1603–1612 (ASAQDETPIT) has biased composition (polar residues). Composition is skewed to basic and acidic residues over residues 1629-1639 (DISKDMSEASE) and 1675-1699 (VPEDDGHALLAERIEKSLVEPKEDE). Ser-1727 is subject to Phosphoserine. Basic and acidic residues-rich tracts occupy residues 1734–1757 (KQKEKEDAQEVELQEGKVHSESDK) and 1766–1782 (ELQKQERESAKSELTES).

In terms of assembly, binds to dimeric RII-alpha regulatory subunit of PKC. As to expression, expressed in endothelial cells, cultured fibroblasts and osteosarcoma, but not in platelets, leukocytes, monocytic cell lines or peripherical blood cells.

It is found in the cytoplasm. The protein localises to the cell cortex. Its subcellular location is the cytoskeleton. It localises to the membrane. Functionally, anchoring protein that mediates the subcellular compartmentation of protein kinase A (PKA) and protein kinase C (PKC). The protein is A-kinase anchor protein 12 (AKAP12) of Homo sapiens (Human).